Consider the following 212-residue polypeptide: Translation initiation factor IF-3 (212 aa).

The disordered stretch occupies residues 171–212; that stretch reads PKSASKKGHTPPKTQVEASKQANESAETEEEKKRCHPTKPVL. The segment covering 182–195 has biased composition (polar residues); it reads PKTQVEASKQANES.

This sequence belongs to the IF-3 family. In terms of assembly, monomer.

It localises to the cytoplasm. Its function is as follows. IF-3 binds to the 30S ribosomal subunit and shifts the equilibrium between 70S ribosomes and their 50S and 30S subunits in favor of the free subunits, thus enhancing the availability of 30S subunits on which protein synthesis initiation begins. The chain is Translation initiation factor IF-3 from Porphyromonas gingivalis (strain ATCC 33277 / DSM 20709 / CIP 103683 / JCM 12257 / NCTC 11834 / 2561).